We begin with the raw amino-acid sequence, 629 residues long: 1-deoxy-D-xylulose-5-phosphate synthase (629 aa).

Residues histidine 78 and 119–121 (AHS) contribute to the thiamine diphosphate site. Aspartate 150 provides a ligand contact to Mg(2+). Thiamine diphosphate is bound by residues 151–152 (GA), asparagine 179, tyrosine 286, and glutamate 368. Residue asparagine 179 participates in Mg(2+) binding.

The protein belongs to the transketolase family. DXPS subfamily. As to quaternary structure, homodimer. Mg(2+) serves as cofactor. It depends on thiamine diphosphate as a cofactor.

The catalysed reaction is D-glyceraldehyde 3-phosphate + pyruvate + H(+) = 1-deoxy-D-xylulose 5-phosphate + CO2. It participates in metabolic intermediate biosynthesis; 1-deoxy-D-xylulose 5-phosphate biosynthesis; 1-deoxy-D-xylulose 5-phosphate from D-glyceraldehyde 3-phosphate and pyruvate: step 1/1. Catalyzes the acyloin condensation reaction between C atoms 2 and 3 of pyruvate and glyceraldehyde 3-phosphate to yield 1-deoxy-D-xylulose-5-phosphate (DXP). In Acidovorax ebreus (strain TPSY) (Diaphorobacter sp. (strain TPSY)), this protein is 1-deoxy-D-xylulose-5-phosphate synthase.